The primary structure comprises 447 residues: Putative bacteriocin-SkfA transport system permease protein SkfF (447 aa).

Topologically, residues 1 to 3 (MPF) are cytoplasmic. A helical membrane pass occupies residues 4 to 22 (LIMLLFVGAIGFQVSFVSR). The Extracellular segment spans residues 23 to 29 (STTWDMS). Residues 30–50 (IAGWVLTGVFILYTAFGLFSN) form a helical membrane-spanning segment. Topologically, residues 51–59 (RLPSQMADI) are cytoplasmic. A helical transmembrane segment spans residues 60–80 (IWLYGTATSFSKVVYSVLFFS). At 81–85 (VTWKA) the chain is on the extracellular side. A helical transmembrane segment spans residues 86–104 (LLWIISAIFGDVLIVLLSG). Residues 105–113 (DHINLLGRS) lie on the Cytoplasmic side of the membrane. Residues 114–134 (IIFVGLFFIAEVWLMSVSCAR) traverse the membrane as a helical segment. The Extracellular portion of the chain corresponds to 135 to 141 (TVKKMKR). A helical membrane pass occupies residues 142–160 (VYVLVFLLMLGIYSICLYR). At 161–189 (FFFLQHSSGIWESIARFISGVGLVFDTLS) the chain is on the cytoplasmic side. The chain crosses the membrane as a helical span at residues 190–208 (PLYVVVFIGIITVSFMTIA). Over 209–247 (FTSRQVEMKESLVKEAEFWEEFQERQFGSGQIIQKPKTT) the chain is Extracellular. Residues 248–268 (WWGLQGLNGIWSFLWLELLLF) form a helical membrane-spanning segment. Topologically, residues 269 to 297 (KKYLFFHSIHTVMLSGVFYVVIFMYPEWF) are cytoplasmic. A helical membrane pass occupies residues 298–318 (YLLFFLIVSAVMLSSYYSGIV). The Extracellular portion of the chain corresponds to 319-341 (RHSQSGTLHLFPGALWKKIIILE). A helical membrane pass occupies residues 342–360 (LTNTVWLYILYCVSITFMA). Over 361–363 (VGN) the chain is Cytoplasmic. Residues 364–382 (LVYWYIYGLGIYIWFMTIR) traverse the membrane as a helical segment. At 383–404 (LFAFTHTNRNDIKLSLPQYYKS) the chain is on the extracellular side. Residues 405–423 (FFMALGLSGICLYVIHLLT) traverse the membrane as a helical segment. At 424-426 (ADW) the chain is on the cytoplasmic side. Residues 427–447 (YTLVVVVCIGSLSWCLFYRFR) form a helical membrane-spanning segment.

Its subcellular location is the cell membrane. Its function is as follows. Probably part of the ABC transporter SkfEF involved in the export of the bacteriocin SKF. Probably responsible for the translocation of bacteriocin SkfA across the membrane. This Bacillus subtilis (strain 168) protein is Putative bacteriocin-SkfA transport system permease protein SkfF.